The chain runs to 293 residues: DDRGK domain-containing protein 1 (293 aa).

The Lumenal portion of the chain corresponds to 1 to 6 (MWGPLI). The helical transmembrane segment at 7–27 (YALLGLAIVAAAFLFVRRSQA) threads the bilayer. Topologically, residues 28-293 (KEVVPVADDD…PADVDETTTA (266 aa)) are cytoplasmic. Disordered stretches follow at residues 30 to 151 (VVPV…RQKE) and 273 to 293 (TDVEFPGDEPAPADVDETTTA). 2 stretches are compositionally biased toward basic and acidic residues: residues 90–126 (KLQEKEERRRRNEEMAQAREQAKLLQHQEEEERKERE) and 133–151 (ERQREAELEREREAQRQKE).

Belongs to the DDRGK1 family.

The protein resides in the endoplasmic reticulum membrane. Its function is as follows. Substrate adapter for ufmylation, the covalent attachment of the ubiquitin-like modifier UFM1 to substrate proteins. The sequence is that of DDRGK domain-containing protein 1 from Monosiga brevicollis (Choanoflagellate).